The primary structure comprises 448 residues: C4-dicarboxylate transport protein 2 (448 aa).

9 helical membrane passes run 13 to 33 (SLYV…HFSP), 49 to 69 (LIKM…IAGM), 81 to 101 (LALL…LIVV), 149 to 169 (AFAK…GFAL), 193 to 213 (IVGI…AFTI), 227 to 247 (LMGA…GIVS), 294 to 314 (VVGL…SIYL), 335 to 355 (ITLL…TGSG), and 357 to 377 (IVLA…LALI).

It belongs to the dicarboxylate/amino acid:cation symporter (DAACS) (TC 2.A.23) family.

Its subcellular location is the cell inner membrane. In terms of biological role, responsible for the transport of dicarboxylates such as succinate, fumarate, and malate from the periplasm across the membrane. This Polaromonas naphthalenivorans (strain CJ2) protein is C4-dicarboxylate transport protein 2.